Here is a 157-residue protein sequence, read N- to C-terminus: Small ribosomal subunit protein uS7 (157 aa).

This sequence belongs to the universal ribosomal protein uS7 family. As to quaternary structure, part of the 30S ribosomal subunit. Contacts proteins S9 and S11.

One of the primary rRNA binding proteins, it binds directly to 16S rRNA where it nucleates assembly of the head domain of the 30S subunit. Is located at the subunit interface close to the decoding center, probably blocks exit of the E-site tRNA. In Verminephrobacter eiseniae (strain EF01-2), this protein is Small ribosomal subunit protein uS7.